A 165-amino-acid chain; its full sequence is Lipoprotein signal peptidase (165 aa).

The next 3 helical transmembrane spans lie at 9–29, 69–89, and 98–118; these read FLAI…VLLY, KYFL…FLFL, and IRFS…DILF. Residues Asp-124 and Asp-142 contribute to the active site. A helical membrane pass occupies residues 133–153; that stretch reads WYFPTFNFADIFISLGTFIFV.

This sequence belongs to the peptidase A8 family.

The protein resides in the cell inner membrane. It carries out the reaction Release of signal peptides from bacterial membrane prolipoproteins. Hydrolyzes -Xaa-Yaa-Zaa-|-(S,diacylglyceryl)Cys-, in which Xaa is hydrophobic (preferably Leu), and Yaa (Ala or Ser) and Zaa (Gly or Ala) have small, neutral side chains.. The protein operates within protein modification; lipoprotein biosynthesis (signal peptide cleavage). Functionally, this protein specifically catalyzes the removal of signal peptides from prolipoproteins. The chain is Lipoprotein signal peptidase from Chlamydia caviae (strain ATCC VR-813 / DSM 19441 / 03DC25 / GPIC) (Chlamydophila caviae).